Here is a 702-residue protein sequence, read N- to C-terminus: Lipase maturation factor 2 (702 aa).

8 helical membrane passes run 10–30 (LFLQ…YTQI), 75–95 (AQGL…ALLL), 164–184 (DLPF…SGVV), 226–246 (LSVV…FAPI), 259–279 (LLQV…LTLV), 316–336 (LLLE…YFGL), 363–383 (VTLP…LVVL), and 398–418 (AGIQ…ISLV). Asn488 carries N-linked (GlcNAc...) asparagine glycosylation. The chain crosses the membrane as a helical span at residues 636–656 (ILLWGLFGAVVAIRVVQTLLA). The disordered stretch occupies residues 660-702 (LQSSKQTREEKRKQTSKKDSRAASEQAAANSNSRDSWAPRRKK). Basic and acidic residues predominate over residues 665–681 (QTREEKRKQTSKKDSRA). Residues 682–693 (ASEQAAANSNSR) are compositionally biased toward low complexity.

It belongs to the lipase maturation factor family.

It is found in the endoplasmic reticulum membrane. In terms of biological role, involved in the maturation of specific proteins in the endoplasmic reticulum. May be required for maturation and transport of active lipoprotein lipase (LPL) through the secretory pathway. This is Lipase maturation factor 2 (Lmf2) from Mus musculus (Mouse).